Here is a 37-residue protein sequence, read N- to C-terminus: MKVRPSVRKICDKCCLIRRHRKLLVICSNPKHKQRQG.

The protein belongs to the bacterial ribosomal protein bL36 family.

Its subcellular location is the plastid. It is found in the chloroplast. In Nephroselmis olivacea (Green alga), this protein is Large ribosomal subunit protein bL36c (rpl36).